A 407-amino-acid chain; its full sequence is Expansin-like protein 2 (407 aa).

The N-terminal stretch at 1–23 (MKMKNFLSKSLLVLLIGLIGVKS) is a signal peptide. One can recognise an Expansin-like EG45 domain in the interval 42–141 (HGNCGYEQLT…KKVSCDVTGN (100 aa)). Intrachain disulfides connect cysteine 45/cysteine 75 and cysteine 78/cysteine 136. N-linked (GlcNAc...) asparagine glycosylation is found at asparagine 70, asparagine 117, and asparagine 387.

Belongs to the expansin family. Expansin A subfamily.

Its subcellular location is the secreted. In terms of biological role, unlikely to encode with a protein with expansin activity. The protein is Expansin-like protein 2 (expl2) of Dictyostelium discoideum (Social amoeba).